The chain runs to 367 residues: Peptide chain release factor 2 (367 aa).

Q249 carries the post-translational modification N5-methylglutamine.

This sequence belongs to the prokaryotic/mitochondrial release factor family. Post-translationally, methylated by PrmC. Methylation increases the termination efficiency of RF2.

The protein localises to the cytoplasm. In terms of biological role, peptide chain release factor 2 directs the termination of translation in response to the peptide chain termination codons UGA and UAA. This Thermotoga sp. (strain RQ2) protein is Peptide chain release factor 2.